Here is a 277-residue protein sequence, read N- to C-terminus: Collectin-10 (277 aa).

Residues 1 to 27 (MNGFRVLLRSNLSMLLLLALLHFQSLG) form the signal peptide. An N-linked (GlcNAc...) asparagine glycan is attached at Asn-11. The segment at 41 to 103 (THTISPGPKG…IGKKGDKGEK (63 aa)) is disordered. Positions 45–103 (SPGPKGDDGERGDTGEEGKDGKVGRQGPKGVKGELGDMGAQGNIGKSGPIGKKGDKGEK) constitute a Collagen-like domain. Over residues 49–67 (KGDDGERGDTGEEGKDGKV) the composition is skewed to basic and acidic residues. The C-type lectin domain maps to 155–271 (TEEKFYYIVQ…CHLTMYFVCE (117 aa)). 2 disulfide bridges follow: Cys-176–Cys-270 and Cys-248–Cys-262. N-linked (GlcNAc...) asparagine glycosylation occurs at Asn-258.

Belongs to the COLEC10/COLEC11 family. Expressed mainly in the liver and stomach, but also in muscles, testes, and intestines.

Its subcellular location is the secreted. The protein resides in the golgi apparatus. It localises to the cytoplasm. In terms of biological role, lectin that binds to various sugars: galactose &gt; mannose = fucose &gt; N-acetylglucosamine &gt; N-acetylgalactosamine. Acts as a chemoattractant, probably involved in the regulation of cell migration. This Mus musculus (Mouse) protein is Collectin-10 (Colec10).